The sequence spans 342 residues: Mitochondrial fission factor (342 aa).

Over 1 to 322 (MSKGTSSDTS…ENKERAKREM (322 aa)) the chain is Cytoplasmic. Residue threonine 115 is modified to Phosphothreonine. Phosphoserine is present on alanine 146. Arginine 149 carries the phosphothreonine modification. Phosphoserine occurs at positions 151, 155, 157, and 172. Position 200 is a phosphothreonine (threonine 200). Serine 202, serine 229, serine 233, and serine 295 each carry phosphoserine. Residues 291 to 322 (VDAASLRRQIIKLNRRLQLLEEENKERAKREM) are a coiled coil. The chain crosses the membrane as a helical; Anchor for type IV membrane protein span at residues 323 to 340 (VMYSITVAFWLLNSWLWF). Topologically, residues 341–342 (RR) are mitochondrial intermembrane.

It belongs to the Tango11 family. In terms of assembly, homodimer. Interacts with DNM1L. Interacts with C11orf65/MFI; the interaction inhibits MFF interaction with DNM1L. As to expression, highly expressed in heart, kidney, liver, brain, muscle, and stomach.

The protein resides in the mitochondrion outer membrane. The protein localises to the peroxisome. Its subcellular location is the cytoplasmic vesicle. It localises to the secretory vesicle. It is found in the synaptic vesicle. Its function is as follows. Plays a role in mitochondrial and peroxisomal fission. Promotes the recruitment and association of the fission mediator dynamin-related protein 1 (DNM1L) to the mitochondrial surface. May be involved in regulation of synaptic vesicle membrane dynamics by recruitment of DNM1L to clathrin-containing vesicles. The protein is Mitochondrial fission factor (MFF) of Homo sapiens (Human).